We begin with the raw amino-acid sequence, 62 residues long: UPF0434 protein Tola_2233 (62 aa).

It belongs to the UPF0434 family.

This Tolumonas auensis (strain DSM 9187 / NBRC 110442 / TA 4) protein is UPF0434 protein Tola_2233.